The sequence spans 314 residues: Bifunctional pinoresinol-lariciresinol reductase 3 (314 aa).

NADP(+) contacts are provided by residues 11 to 17 (GGTGFIG), arginine 36, and lysine 45. Residue lysine 138 is the Proton acceptor of the active site. An NADP(+)-binding site is contributed by arginine 142. A substrate-binding site is contributed by histidine 272.

Belongs to the NmrA-type oxidoreductase family. Isoflavone reductase subfamily. As to quaternary structure, dimer.

The catalysed reaction is (-)-lariciresinol + NADP(+) = (-)-pinoresinol + NADPH + H(+). The enzyme catalyses (+)-secoisolariciresinol + NADP(+) = (-)-lariciresinol + NADPH + H(+). In terms of biological role, reductase involved in lignan biosynthesis. Catalyzes the enantioselective sequential conversion of (-)-pinoresinol into (-)-lariciresinol and of (-)-lariciresinol into (+)-secoisolariciresinol. Abstracts the 4R-hydride from the NADPH cofactor during catalysis. This Thuja plicata (Western red-cedar) protein is Bifunctional pinoresinol-lariciresinol reductase 3.